The chain runs to 359 residues: Type II methyltransferase M.HinfI (359 aa).

Residues 275–358 form the RAMA domain; the sequence is KVPMKTLIEA…LDSLRYEYTN (84 aa).

This sequence belongs to the N(4)/N(6)-methyltransferase family.

It catalyses the reaction a 2'-deoxyadenosine in DNA + S-adenosyl-L-methionine = an N(6)-methyl-2'-deoxyadenosine in DNA + S-adenosyl-L-homocysteine + H(+). A beta subtype methylase that recognizes the double-stranded sequence 5'-GANTC-3', methylates A-2 on both strands, and protects the DNA from cleavage by the HinfI endonuclease. The sequence is that of Type II methyltransferase M.HinfI (hinfIM) from Haemophilus influenzae.